A 566-amino-acid chain; its full sequence is F-box/WD repeat-containing protein 5 (566 aa).

In terms of domain architecture, F-box spans 3 to 49; it reads EGGTPLLPDSLVYQIFLSLGPADVLAAGLVCRQWQAVSRDEFLWREQ. WD repeat units follow at residues 83-125, 126-178, 179-238, and 239-281; these read VEVQ…DLTI, SLLH…LDSF, ALLS…VKRL, and FKIQ…RIFD. At S151 the chain carries Phosphoserine; by PLK4. At S284 the chain carries Phosphoserine. Positions 303–311 match the D-box motif; it reads RHFLDRVLE. WD repeat units follow at residues 394 to 447, 458 to 501, and 502 to 539; these read ALDH…DLLV, RALR…RHYN, and ICLA…KAWR.

It belongs to the FBXW5 family. Part of the SCF (SKP1-CUL1-F-box) E3 ubiquitin-protein ligase complex SCF(FBXW5) composed of CUL1, SKP1, RBX1 and FBXW5. Component of the DCX(FBXW5) E3 ubiquitin ligase complex, at least composed of (CUL4A or CUL4B), DDB1, FBXW5 and RBX1. Interacts with CDC20, EPS8, TSC1, TSC2 and SASS6. Interacts with TNFAIP8L1; TNFAIP8L1 competes with TSC2 to bind FBXW5 increasing TSC2 stability by preventing its ubiquitination. In terms of processing, phosphorylated at Ser-151 by PLK4 during the G1/S transition, leading to inhibit its ability to ubiquitinate SASS6. Ubiquitinated and degraded by the APC/C complex during mitosis and G1 phase.

The protein localises to the cytoplasm. Its pathway is protein modification; protein ubiquitination. Substrate recognition component of both SCF (SKP1-CUL1-F-box protein) and DCX (DDB1-CUL4-X-box) E3 ubiquitin-protein ligase complexes. Substrate recognition component of the SCF(FBXW5) E3 ubiquitin-protein ligase complex which mediates the ubiquitination and subsequent proteasomal degradation of SASS6 during S phase, leading to prevent centriole reduplication. The SCF(FBXW5) complex also mediates ubiquitination and degradation of actin-regulator EPS8 during G2 phase, leading to the transient degradation of EPS8 and subsequent cell shape changes required to allow mitotic progression. Substrate-specific adapter of the DCX(FBXW5) E3 ubiquitin-protein ligase complex which mediates the polyubiquitination and subsequent degradation of TSC2. May also act as a negative regulator of MAP3K7/TAK1 signaling in the interleukin-1B (IL1B) signaling pathway. This Homo sapiens (Human) protein is F-box/WD repeat-containing protein 5 (FBXW5).